The sequence spans 260 residues: MSEVESQQSQETNGSSKFDVPEIELIIKASTIDGRRKGACLFCQEYFMDLYLLAELKTISLKVTTVDMQKPPPDFRTNFEATHPPILIDNGLAILENEKIERHIMKNIPGGYNLFVQDKEVATLIENLYVKLKLMLVKKDEAKNNALLSHLRKINDHLSARNTRFLTGDTMCCFDCELMPRLQHIRVAGKYFVDFEIPTHLTALWRYMYHMYQLDAFTQSCPADQDIINHYKLQQSLKMKKHEELETPTFTTYIPIDISE.

A helical membrane pass occupies residues 42–66 (FCQEYFMDLYLLAELKTISLKVTTV).

The protein belongs to the chloride channel CLIC family. As to expression, expressed in cardiac tubes.

It localises to the mitochondrion. It is found in the membrane. In terms of biological role, might insert into membranes and form chloride ion channels. Channel activity depends on the pH. May play a role in ethanol sensitivity. This is Chloride intracellular channel Clic from Drosophila melanogaster (Fruit fly).